An 81-amino-acid polypeptide reads, in one-letter code: N.vectensis toxin 4 (81 aa).

A signal peptide spans 1 to 20 (MRSSWMFVICFAMLILYTNG). 3 cysteine pairs are disulfide-bonded: C46–C75, C48–C70, and C63–C76.

As to expression, expressed in ectodermal gland cells. In adult female tissues, highly transcribed in mesenteries (gametes-producing tissue) and slightly transcribed in tentacles, pharynx and physa.

Has toxic effects on zebrafish larvae. It causes contractile paralysis and twitching of the tail within 30 minutes, followed by death within 40 minutes. Does not show any toxicity when injected into arthropods (cherry shrimps or grass shrimps). The polypeptide is N.vectensis toxin 4 (Nematostella vectensis (Starlet sea anemone)).